The primary structure comprises 348 residues: Arginine kinase Oct f 2 (348 aa).

Positions 1-83 (MAEELFKTLQ…LDAVIMDYHK (83 aa)) constitute a Phosphagen kinase N-terminal domain. 56–60 (GVGIY) contacts substrate. One can recognise a Phosphagen kinase C-terminal domain in the interval 111–347 (MIVSTRVRVG…NEIIREETNS (237 aa)). ATP is bound by residues 114–118 (STRVR) and histidine 177. Residue glutamate 217 participates in substrate binding. Arginine 221 lines the ATP pocket. Cysteine 263 contributes to the substrate binding site. ATP contacts are provided by residues 272 to 276 (RASVH) and 300 to 305 (RGIHGE). Glutamate 305 provides a ligand contact to substrate.

Belongs to the ATP:guanido phosphotransferase family. Muscle (at protein level).

It carries out the reaction L-arginine + ATP = N(omega)-phospho-L-arginine + ADP + H(+). Functionally, catalyzes the reversible transfer of high energy ATP gamma-phosphate group to L-arginine. The protein is Arginine kinase Oct f 2 of Amphioctopus fangsiao (Ocellated octopus).